A 463-amino-acid polypeptide reads, in one-letter code: O-acetyltransferase SAT5 (463 aa).

This sequence belongs to the trichothecene 3-O-acetyltransferase family.

Its pathway is mycotoxin biosynthesis. In terms of biological role, O-acetyltransferase; part of the satratoxin SC1 cluster involved in the biosynthesis of satratoxins, trichothecene mycotoxins that are associated with human food poisonings. Satratoxins are suggested to be made by products of multiple gene clusters (SC1, SC2 and SC3) that encode 21 proteins in all, including polyketide synthases, acetyltransferases, and other enzymes expected to modify the trichothecene skeleton. SC1 encodes 10 proteins, SAT1 to SAT10. The largest are SAT8, which encodes a putative polyketide synthase (PKS) with a conventional non-reducing architecture, and SAT10, a putative protein containing four ankyrin repeats and thus may be involved in protein scaffolding. The putative short-chain reductase SAT3 may assist the PKS in some capacity. SAT6 contains a secretory lipase domain and acts probably as a trichothecene esterase. SAT5 encodes a putative acetyltransferase, and so, with SAT6, may affect endogenous protection from toxicity. The probable transcription factor SAT9 may regulate the expression of the SC1 cluster. SC2 encodes proteins SAT11 to SAT16, the largest of which encodes the putative reducing PKS SAT13. SAT11 is a cytochrome P450 monooxygenase, while SAT14 and SAT16 are probable acetyltransferases. The SC2 cluster may be regulated by the transcription factor SAT15. SC3 is a small cluster that encodes 5 proteins, SAT17 to SAT21. SAT21 is a putative MFS-type transporter which may have a role in exporting secondary metabolites. The four other proteins putatively encoded in SC3 include the taurine hydroxylase-like protein SAT17, the O-methyltransferase SAT18, the acetyltransferase SAT19, and the Cys6-type zinc finger SAT20, the latter being probably involved in regulation of SC3 expression. The polypeptide is O-acetyltransferase SAT5 (Stachybotrys chartarum (strain CBS 109288 / IBT 7711) (Toxic black mold)).